Here is a 128-residue protein sequence, read N- to C-terminus: NADH-quinone oxidoreductase subunit A (128 aa).

Transmembrane regions (helical) follow at residues 5–25 (IPIL…VVIA), 72–92 (LTAM…PWAV), and 100–120 (FALV…AYVW).

Belongs to the complex I subunit 3 family. In terms of assembly, NDH-1 is composed of 14 different subunits. Subunits NuoA, H, J, K, L, M, N constitute the membrane sector of the complex.

Its subcellular location is the cell membrane. It catalyses the reaction a quinone + NADH + 5 H(+)(in) = a quinol + NAD(+) + 4 H(+)(out). Functionally, NDH-1 shuttles electrons from NADH, via FMN and iron-sulfur (Fe-S) centers, to quinones in the respiratory chain. The immediate electron acceptor for the enzyme in this species is believed to be a menaquinone. Couples the redox reaction to proton translocation (for every two electrons transferred, four hydrogen ions are translocated across the cytoplasmic membrane), and thus conserves the redox energy in a proton gradient. In Mycobacterium bovis (strain ATCC BAA-935 / AF2122/97), this protein is NADH-quinone oxidoreductase subunit A.